A 171-amino-acid polypeptide reads, in one-letter code: 3-hydroxydecanoyl-[acyl-carrier-protein] dehydratase (171 aa).

H71 is an active-site residue.

The protein belongs to the thioester dehydratase family. FabA subfamily. In terms of assembly, homodimer.

The protein resides in the cytoplasm. The catalysed reaction is a (3R)-hydroxyacyl-[ACP] = a (2E)-enoyl-[ACP] + H2O. It carries out the reaction (3R)-hydroxydecanoyl-[ACP] = (2E)-decenoyl-[ACP] + H2O. It catalyses the reaction (2E)-decenoyl-[ACP] = (3Z)-decenoyl-[ACP]. The protein operates within lipid metabolism; fatty acid biosynthesis. Necessary for the introduction of cis unsaturation into fatty acids. Catalyzes the dehydration of (3R)-3-hydroxydecanoyl-ACP to E-(2)-decenoyl-ACP and then its isomerization to Z-(3)-decenoyl-ACP. Can catalyze the dehydratase reaction for beta-hydroxyacyl-ACPs with saturated chain lengths up to 16:0, being most active on intermediate chain length. This chain is 3-hydroxydecanoyl-[acyl-carrier-protein] dehydratase, found in Hamiltonella defensa subsp. Acyrthosiphon pisum (strain 5AT).